We begin with the raw amino-acid sequence, 603 residues long: Pentatricopeptide repeat-containing protein At2g02980, chloroplastic (603 aa).

A chloroplast-targeting transit peptide spans M1–K38. PPR repeat units follow at residues D93 to P127, D128 to D162, N163 to P193, C194 to P228, N229 to K263, Y264 to K294, D295 to P329, D330 to P365, S366 to M400, and H432 to K466. The interval L401–N476 is type E motif. The type E(+) motif stretch occupies residues N477 to K507. A type DYW motif region spans residues L508–W603.

This sequence belongs to the PPR family. PCMP-H subfamily.

Its subcellular location is the plastid. The protein localises to the chloroplast. Involved in RNA editing event in chloroplasts. Required for the editing of a single site in ndhD transcript, which is a plastid-encoded subunits of the chloroplast NAD(P)H dehydrogenase (NDH) complex. Not essential for the activity of the NDH complex of the photosynthetic electron transport chain. In Arabidopsis thaliana (Mouse-ear cress), this protein is Pentatricopeptide repeat-containing protein At2g02980, chloroplastic (PCMP-H26).